Reading from the N-terminus, the 1499-residue chain is Streptococcal surface protein B (1499 aa).

Residues 1–37 (MQKREVFGFRKSKVAKTLCGAVLGAALIAIADQQVLA) form the signal peptide. Positions 50–84 (AVTTTGNPATNLPEAQGEATEAASQSQAQAGSKDG) are disordered. 4 Ag I/II A repeats span residues 145-219 (KKTT…QKAN), 220-301 (EDSQ…KKAK), 302-383 (EDND…KQAN), and 384-465 (ATNE…KKDF). 3 disordered regions span residues 689-709 (YADS…SEWD), 763-907 (TAPT…TPPV), and 1409-1472 (RTTT…TGTN). The segment covering 694–705 (NAEKSRGARWDT) has biased composition (basic and acidic residues). The span at 789–799 (PTPPVKTPDQP) shows a compositional bias: pro residues. Residues 800 to 815 (EPSKPEEPTYETEKPL) are compositionally biased toward basic and acidic residues. The segment covering 828–838 (PTPPVKIPDQP) has biased composition (pro residues). The segment covering 839–854 (EPSKPEEPTYETEKPL) has biased composition (basic and acidic residues). 2 stretches are compositionally biased toward pro residues: residues 867-877 (PTPPVKTPDQP) and 888-907 (DPLP…TPPV). The span at 1428 to 1450 (KPKDPDKPETPKEPKVPSPKVED) shows a compositional bias: basic and acidic residues. Positions 1466-1470 (LPKTG) match the LPXTG sorting signal motif. Thr1469 bears the Pentaglycyl murein peptidoglycan amidated threonine mark. A propeptide spans 1470 to 1499 (GTNDATYMPYLGLAALVGFLGLGLAKRKED) (removed by sortase).

Belongs to the antigen I/II family.

The protein localises to the secreted. It localises to the cell wall. The protein resides in the cell surface. Its function is as follows. Adhesin that mediates binding of bacteria to a variety of host cells. Plays a role in the bacterial invasion of dentinal tubules. A host immunostimulatory component, it modulates the innate immunity response. Plays a protective role against some antibiotics and cationic antimicrobial peptides (histatin-5, HTN3, but not beta-defensin 4A, DEFB4A). This chain is Streptococcal surface protein B, found in Streptococcus gordonii (strain Challis / ATCC 35105 / BCRC 15272 / CH1 / DL1 / V288).